A 790-amino-acid chain; its full sequence is LMBR1 domain-containing protein 2 homolog B (790 aa).

Over residues 1-21 (MSSNTTTPTPTSTPTPTSSPS) the composition is skewed to low complexity. The interval 1-22 (MSSNTTTPTPTSTPTPTSSPSI) is disordered. Helical transmembrane passes span 34–54 (FGNL…VLIG), 66–86 (IYAT…AYLV), 128–148 (FLYF…QSFS), 167–187 (VILY…ILSV), and 195–215 (FLSF…TITM). A coiled-coil region spans residues 236 to 266 (LRNYRVEAVVLKTELEDVKRQLIDHLKLIKT). 3 helical membrane passes run 401-421 (FIIA…SEIV), 442-462 (PGIG…VCSY), and 539-559 (FTLF…FNLH). 3 disordered regions span residues 630–665 (SQLD…PKLS), 701–751 (LGEK…TKDK), and 765–790 (SFQD…KNKK). Polar residues predominate over residues 644 to 665 (IDSSNRYKPTPTKTSINIPKLS). The span at 706–734 (NASNNNNNNNNNNNNNNSNNKNSNNNNNS) shows a compositional bias: low complexity. The span at 735–746 (ILTSNYESYSTP) shows a compositional bias: polar residues. A compositionally biased stretch (acidic residues) spans 766-778 (FQDDDDHTFDDIE).

The protein belongs to the LIMR family.

The protein localises to the membrane. The chain is LMBR1 domain-containing protein 2 homolog B from Dictyostelium discoideum (Social amoeba).